The sequence spans 541 residues: AT-rich interactive domain-containing protein 3A (541 aa).

A disordered region spans residues 17–172 (RLQQELEARQ…KHPNPQAFPT (156 aa)). The span at 55-73 (LKIQRAQAAALAAMRAAAA) shows a compositional bias: low complexity. Positions 84–102 (SDEEEEDGESMASDEEDEK) are enriched in acidic residues. A compositionally biased stretch (basic and acidic residues) spans 103 to 112 (ERDGESERYP). Residues 115-144 (GSEEEDLKGKWDEDDFEDEGEEDDYEDMEE) show a composition bias toward acidic residues. Positions 212–304 (DPKRKEFLDD…YLYPYECEKR (93 aa)) constitute an ARID domain. The REKLES domain occupies 407-501 (AALEQLREKL…GVLFAQPPTS (95 aa)). Residues 408-450 (ALEQLREKLESGEPPEKKMALGTEEQQRLQRAIQHNLLAMTAQ) are important for nuclear localization. Residues 452–473 (PMNIRINSQAEGRQDSAVNLTT) are homodimerization. Residues 497–504 (QPPTSASG) form an important for cytoplasmic localization region. The segment at 499–541 (PTSASGTSKGSSNRTGSIGGGSSTSQAAPPPAPSAPTSNNPSP) is disordered.

As to quaternary structure, homodimer.

It is found in the nucleus. The protein localises to the cytoplasm. In terms of biological role, transcription factor required for smad1 and smad2-mediated responses to TGFbeta during mesoderm induction. In Xenopus tropicalis (Western clawed frog), this protein is AT-rich interactive domain-containing protein 3A (arid3a).